The primary structure comprises 120 residues: U15-barytoxin-Tl1c (120 aa).

The N-terminal stretch at 1-16 (MKLFMVLVASFAFAVA) is a signal peptide. 4 disulfide bridges follow: C55-C73, C66-C79, C70-C118, and C72-C89.

It belongs to the neurotoxin 03 (Tx2) family. 03 subfamily. Expressed by the venom gland.

The protein localises to the secreted. Ion channel inhibitor. The polypeptide is U15-barytoxin-Tl1c (Trittame loki (Brush-footed trapdoor spider)).